Consider the following 239-residue polypeptide: AA9 family lytic polysaccharide monooxygenase C (239 aa).

Histidine 1 is a binding site for Cu(2+). Cysteine 39 and cysteine 190 are disulfide-bonded. A glycan (N-linked (GlcNAc...) asparagine) is linked at asparagine 75. Histidine 84 serves as a coordination point for Cu(2+). Asparagine 135 carries N-linked (GlcNAc...) asparagine glycosylation. The O2 site is built by histidine 157 and glutamine 166. A Cu(2+)-binding site is contributed by tyrosine 168. N-linked (GlcNAc...) asparagine glycans are attached at residues asparagine 194 and asparagine 229.

The protein belongs to the polysaccharide monooxygenase AA9 family. It depends on Cu(2+) as a cofactor.

The protein localises to the secreted. The catalysed reaction is [(1-&gt;4)-beta-D-glucosyl]n+m + reduced acceptor + O2 = 4-dehydro-beta-D-glucosyl-[(1-&gt;4)-beta-D-glucosyl]n-1 + [(1-&gt;4)-beta-D-glucosyl]m + acceptor + H2O.. Functionally, lytic polysaccharide monooxygenase (LPMO) that depolymerizes crystalline and amorphous polysaccharides via the oxidation of scissile alpha- or beta-(1-4)-glycosidic bonds, yielding C1 or C4 oxidation products. Catalysis by LPMOs requires the reduction of the active-site copper from Cu(II) to Cu(I) by a reducing agent and H(2)O(2) or O(2) as a cosubstrate. The polypeptide is AA9 family lytic polysaccharide monooxygenase C (Gloeophyllum trabeum (Brown rot fungus)).